Here is a 124-residue protein sequence, read N- to C-terminus: Small ribosomal subunit protein uS12 (124 aa).

The segment at 1–25 (MATINQLVRKPRQASTYKSASPALD) is disordered.

The protein belongs to the universal ribosomal protein uS12 family. Part of the 30S ribosomal subunit. Contacts proteins S8 and S17. May interact with IF1 in the 30S initiation complex.

With S4 and S5 plays an important role in translational accuracy. In terms of biological role, interacts with and stabilizes bases of the 16S rRNA that are involved in tRNA selection in the A site and with the mRNA backbone. Located at the interface of the 30S and 50S subunits, it traverses the body of the 30S subunit contacting proteins on the other side and probably holding the rRNA structure together. The combined cluster of proteins S8, S12 and S17 appears to hold together the shoulder and platform of the 30S subunit. This is Small ribosomal subunit protein uS12 from Xylella fastidiosa (strain 9a5c).